The primary structure comprises 382 residues: Galactokinase (382 aa).

Residue 34-37 participates in substrate binding; it reads EHTD. 124-130 provides a ligand contact to ATP; sequence GAGLSSS. Mg(2+) is bound by residues Ser130 and Glu162. Asp174 functions as the Proton acceptor in the catalytic mechanism. Position 223 (Tyr223) interacts with substrate.

This sequence belongs to the GHMP kinase family. GalK subfamily.

It localises to the cytoplasm. It catalyses the reaction alpha-D-galactose + ATP = alpha-D-galactose 1-phosphate + ADP + H(+). It participates in carbohydrate metabolism; galactose metabolism. Catalyzes the transfer of the gamma-phosphate of ATP to D-galactose to form alpha-D-galactose-1-phosphate (Gal-1-P). This is Galactokinase from Salmonella arizonae (strain ATCC BAA-731 / CDC346-86 / RSK2980).